We begin with the raw amino-acid sequence, 254 residues long: 3-deoxy-manno-octulosonate cytidylyltransferase (254 aa).

This sequence belongs to the KdsB family.

It is found in the cytoplasm. It carries out the reaction 3-deoxy-alpha-D-manno-oct-2-ulosonate + CTP = CMP-3-deoxy-beta-D-manno-octulosonate + diphosphate. The protein operates within nucleotide-sugar biosynthesis; CMP-3-deoxy-D-manno-octulosonate biosynthesis; CMP-3-deoxy-D-manno-octulosonate from 3-deoxy-D-manno-octulosonate and CTP: step 1/1. Its pathway is bacterial outer membrane biogenesis; lipopolysaccharide biosynthesis. Activates KDO (a required 8-carbon sugar) for incorporation into bacterial lipopolysaccharide in Gram-negative bacteria. This is 3-deoxy-manno-octulosonate cytidylyltransferase from Chlamydia trachomatis serovar L2 (strain ATCC VR-902B / DSM 19102 / 434/Bu).